The sequence spans 962 residues: Glycine dehydrogenase (decarboxylating) (962 aa).

The residue at position 709 (Lys-709) is an N6-(pyridoxal phosphate)lysine.

The protein belongs to the GcvP family. In terms of assembly, the glycine cleavage system is composed of four proteins: P, T, L and H. It depends on pyridoxal 5'-phosphate as a cofactor.

The enzyme catalyses N(6)-[(R)-lipoyl]-L-lysyl-[glycine-cleavage complex H protein] + glycine + H(+) = N(6)-[(R)-S(8)-aminomethyldihydrolipoyl]-L-lysyl-[glycine-cleavage complex H protein] + CO2. Functionally, the glycine cleavage system catalyzes the degradation of glycine. The P protein binds the alpha-amino group of glycine through its pyridoxal phosphate cofactor; CO(2) is released and the remaining methylamine moiety is then transferred to the lipoamide cofactor of the H protein. This is Glycine dehydrogenase (decarboxylating) from Shewanella oneidensis (strain ATCC 700550 / JCM 31522 / CIP 106686 / LMG 19005 / NCIMB 14063 / MR-1).